The sequence spans 305 residues: Methionyl-tRNA formyltransferase (305 aa).

111–114 (SLLP) contacts (6S)-5,6,7,8-tetrahydrofolate.

Belongs to the Fmt family.

The enzyme catalyses L-methionyl-tRNA(fMet) + (6R)-10-formyltetrahydrofolate = N-formyl-L-methionyl-tRNA(fMet) + (6S)-5,6,7,8-tetrahydrofolate + H(+). Its function is as follows. Attaches a formyl group to the free amino group of methionyl-tRNA(fMet). The formyl group appears to play a dual role in the initiator identity of N-formylmethionyl-tRNA by promoting its recognition by IF2 and preventing the misappropriation of this tRNA by the elongation apparatus. In Helicobacter acinonychis (strain Sheeba), this protein is Methionyl-tRNA formyltransferase.